A 414-amino-acid polypeptide reads, in one-letter code: 5-aminolevulinate synthase (414 aa).

Positions 22, 133, and 152 each coordinate substrate. 3 residues coordinate pyridoxal 5'-phosphate: S185, H213, and T241. The active site involves K244. K244 is modified (N6-(pyridoxal phosphate)lysine). Pyridoxal 5'-phosphate is bound by residues T273 and T274. Residue T359 coordinates substrate.

Belongs to the class-II pyridoxal-phosphate-dependent aminotransferase family. Homodimer. Pyridoxal 5'-phosphate is required as a cofactor.

It catalyses the reaction succinyl-CoA + glycine + H(+) = 5-aminolevulinate + CO2 + CoA. Its pathway is porphyrin-containing compound metabolism; protoporphyrin-IX biosynthesis; 5-aminolevulinate from glycine: step 1/1. The sequence is that of 5-aminolevulinate synthase (hemA) from Rickettsia typhi (strain ATCC VR-144 / Wilmington).